The primary structure comprises 254 residues: UPF0246 protein FTN_1542 (254 aa).

The protein belongs to the UPF0246 family.

The chain is UPF0246 protein FTN_1542 from Francisella tularensis subsp. novicida (strain U112).